We begin with the raw amino-acid sequence, 116 residues long: DNA-binding protein Tpen_0471 (116 aa).

It belongs to the PDCD5 family.

The chain is DNA-binding protein Tpen_0471 from Thermofilum pendens (strain DSM 2475 / Hrk 5).